Consider the following 470-residue polypeptide: Syncoilin (470 aa).

The disordered stretch occupies residues 1–43 (MASPEPLRGGDGARASREPHTEASFPLQESESPKEAKTFNPEA). The head stretch occupies residues 1–148 (MASPEPLRGG…TEGSLPAQPI (148 aa)). Position 32 is a phosphoserine (serine 32). The IF rod domain occupies 157 to 452 (SVEDLERLEA…AMLPKSLEQA (296 aa)). The interval 158-192 (VEDLERLEARFQQCVQAVSQLEEERDQLIHELVLL) is coil 1A. A linker 1 region spans residues 193–219 (REPALQEVQQVHQDILAAYKLHAQAEL). Residues 220-297 (ERDGLREEIR…KEQLQQQLEA (78 aa)) are coil 1b. Residues 298–337 (PPTQSDGHFLQESRRLSTQFENLMAESRQGLEEEYEPQLL) form a linker 2 region. Serine 314 carries the phosphoserine modification. The interval 338-445 (RLLERKEAGT…EELSTYKAML (108 aa)) is coil 2. Residues 446–470 (PKSLEQADAPTSQAGGVEAQSPGTV) are disordered. The tract at residues 446-470 (PKSLEQADAPTSQAGGVEAQSPGTV) is tail.

The protein belongs to the intermediate filament family. In terms of assembly, may link the dystrophin-associated glycoprotein complex (DAPC) to intracellular desmin (DES) filaments. Interacts with DES and DTNA. In terms of tissue distribution, detected strongly in skeletal muscle and heart and weakly in lung (at protein level). Highly expressed in skeletal muscle and lung and weakly in lung and testis.

It is found in the cytoplasm. It localises to the perinuclear region. Its function is as follows. Atypical type III intermediate filament (IF) protein that may play a supportive role in the efficient coupling of mechanical stress between the myofibril and fiber exterior. May facilitate lateral force transmission during skeletal muscle contraction. Does not form homofilaments nor heterofilaments with other IF proteins. The sequence is that of Syncoilin (Sync) from Mus musculus (Mouse).